The following is an 87-amino-acid chain: Cell division topological specificity factor (87 aa).

It belongs to the MinE family.

Its function is as follows. Prevents the cell division inhibition by proteins MinC and MinD at internal division sites while permitting inhibition at polar sites. This ensures cell division at the proper site by restricting the formation of a division septum at the midpoint of the long axis of the cell. In Rhizobium meliloti (strain 1021) (Ensifer meliloti), this protein is Cell division topological specificity factor.